Here is a 144-residue protein sequence, read N- to C-terminus: Endoribonuclease YbeY (144 aa).

Zn(2+) is bound by residues His-104, His-108, and His-114.

Belongs to the endoribonuclease YbeY family. The cofactor is Zn(2+).

The protein localises to the cytoplasm. Functionally, single strand-specific metallo-endoribonuclease involved in late-stage 70S ribosome quality control and in maturation of the 3' terminus of the 16S rRNA. This Nitratiruptor sp. (strain SB155-2) protein is Endoribonuclease YbeY.